Consider the following 158-residue polypeptide: Tryptophan-rich sensory protein (158 aa).

5 consecutive transmembrane segments (helical) span residues 5–25, 44–65, 73–93, 97–119, and 124–144; these read WALFLTFLAACGAPATTGALL, WVFPLAWTSLYFLMSLAAMRVA, ALAFYAAQLAFNTLWTPVFFG, MATALAVVMVMWLFVAATMWAFF, and WAGVLFVPYLIWATAATGLNF.

The protein belongs to the TspO/BZRP family. As to quaternary structure, homodimer.

It is found in the membrane. Its subcellular location is the cell inner membrane. Its function is as follows. May play a role in the transmembrane transport of tetrapyrroles and similar compounds, and thereby contribute to the regulation of tetrapyrrole biosynthesis. Binds tetrapyrroles and promotes the photooxidative degradation of protoporphyrin IX. Binds protoporphyrin IX, hemin, and coproporphyrin III, but does not bind delta-aminolevulinic acid. Can bind bilirubin, curcumin, gossypol, retinoic acid, cholesterol and the benzodiazepine receptor agonist PK-11195 (in vitro). Plays a role in the response to low oxygen levels and in the regulation of the biosynthesis of photosynthetic pigments. The protein is Tryptophan-rich sensory protein of Cereibacter sphaeroides (Rhodobacter sphaeroides).